The primary structure comprises 183 residues: CASP-like protein UU2 (183 aa).

Topologically, residues 1–33 (MEESQQQSSKFDAPPSPYVPSRVYLAQIYWKKP) are cytoplasmic. A helical membrane pass occupies residues 34–54 (AIVVLRVLQFIFSLIAFSVMA). Residues 55–72 (DVLHDVQGSIKSLSYTVA) lie on the Extracellular side of the membrane. A helical transmembrane segment spans residues 73–93 (IGVLACAYALAQLSFSLWCVI). Residues 94–118 (RGATSSAGVTPLYQYATFICDQMST) lie on the Cytoplasmic side of the membrane. Residues 119–139 (YFLISAASATATLIDVSGVCG) traverse the membrane as a helical segment. Over 140–156 (SNGSGTNLCSRSTASVT) the chain is Extracellular. Asparagine 141 carries an N-linked (GlcNAc...) asparagine glycan. The chain crosses the membrane as a helical span at residues 157 to 177 (FAFLAFLAFSASSVLTGYYLV). Residues 178–183 (KCILKA) lie on the Cytoplasmic side of the membrane.

Belongs to the Casparian strip membrane proteins (CASP) family. In terms of assembly, homodimer and heterodimers.

It localises to the cell membrane. In Selaginella moellendorffii (Spikemoss), this protein is CASP-like protein UU2.